Reading from the N-terminus, the 234-residue chain is Aspartate/glutamate leucyltransferase (234 aa).

This sequence belongs to the R-transferase family. Bpt subfamily.

It is found in the cytoplasm. It catalyses the reaction N-terminal L-glutamyl-[protein] + L-leucyl-tRNA(Leu) = N-terminal L-leucyl-L-glutamyl-[protein] + tRNA(Leu) + H(+). It carries out the reaction N-terminal L-aspartyl-[protein] + L-leucyl-tRNA(Leu) = N-terminal L-leucyl-L-aspartyl-[protein] + tRNA(Leu) + H(+). Functionally, functions in the N-end rule pathway of protein degradation where it conjugates Leu from its aminoacyl-tRNA to the N-termini of proteins containing an N-terminal aspartate or glutamate. This chain is Aspartate/glutamate leucyltransferase, found in Hahella chejuensis (strain KCTC 2396).